We begin with the raw amino-acid sequence, 770 residues long: Conserved oligomeric Golgi complex subunit 7 (770 aa).

It belongs to the COG7 family. In terms of assembly, component of the conserved oligomeric Golgi complex which is composed of eight different subunits and is required for normal Golgi morphology and localization.

Its subcellular location is the golgi apparatus membrane. Its function is as follows. Required for normal Golgi function. The chain is Conserved oligomeric Golgi complex subunit 7 (Cog7) from Mus musculus (Mouse).